The sequence spans 150 residues: Ribosome maturation factor RimP (150 aa).

The protein belongs to the RimP family.

It localises to the cytoplasm. In terms of biological role, required for maturation of 30S ribosomal subunits. The sequence is that of Ribosome maturation factor RimP from Thermotoga petrophila (strain ATCC BAA-488 / DSM 13995 / JCM 10881 / RKU-1).